The following is a 473-amino-acid chain: Inactive pancreatic lipase-related protein 1 (473 aa).

Positions 1-17 (MLILWTIPLFLLGAAQG) are cleaved as a signal peptide. 2 disulfide bridges follow: Cys-21-Cys-27 and Cys-109-Cys-120. Ser-171 (nucleophile) is an active-site residue. Asp-194 serves as the catalytic Charge relay system. Residues Glu-205, Arg-208, Asp-210, and Asp-213 each contribute to the Ca(2+) site. Cys-255 and Cys-279 are joined by a disulfide. The Charge relay system role is filled by His-281. Cystine bridges form between Cys-303–Cys-314, Cys-317–Cys-322, and Cys-451–Cys-467. The 112-residue stretch at 356-467 (WRYRVSLTFS…EDILLTLLPC (112 aa)) folds into the PLAT domain.

Belongs to the AB hydrolase superfamily. Lipase family. In terms of tissue distribution, expressed in female, but not in male, lacrimal gland. Expressed in male and female sublingual gland and pancreas.

It localises to the secreted. May function as inhibitor of dietary triglyceride digestion. Lacks detectable lipase activity (in vitro). This is Inactive pancreatic lipase-related protein 1 (Pnliprp1) from Mus musculus (Mouse).